The chain runs to 678 residues: Translation factor GUF1 homolog, chloroplastic (678 aa).

Residues 1–43 (MASILLSLNTHTLLPLHTRTRTTKTTLKILRFSHKLPPSSPFY) constitute a chloroplast transit peptide. The 182-residue stretch at 81-262 (KNIRNFCIIA…AIVERVPPPR (182 aa)) folds into the tr-type G domain. Residues 90-97 (AHIDHGKS), 155-159 (DTPGH), and 209-212 (NKID) contribute to the GTP site.

This sequence belongs to the TRAFAC class translation factor GTPase superfamily. Classic translation factor GTPase family. LepA subfamily.

The protein resides in the plastid. Its subcellular location is the chloroplast. The enzyme catalyses GTP + H2O = GDP + phosphate + H(+). Its function is as follows. Promotes chloroplast protein synthesis. May act as a fidelity factor of the translation reaction, by catalyzing a one-codon backward translocation of tRNAs on improperly translocated ribosomes. In Populus trichocarpa (Western balsam poplar), this protein is Translation factor GUF1 homolog, chloroplastic.